A 372-amino-acid polypeptide reads, in one-letter code: N-methyl-L-tryptophan oxidase (372 aa).

4-34 (DLIIIGSGSVGAAAGYYATRAGLNVLMTDAH) contributes to the FAD binding site. Cys308 is modified (S-8alpha-FAD cysteine).

It belongs to the MSOX/MTOX family. MTOX subfamily. In terms of assembly, monomer. It depends on FAD as a cofactor.

The enzyme catalyses N(alpha)-methyl-L-tryptophan + O2 + H2O = L-tryptophan + formaldehyde + H2O2. Catalyzes the oxidative demethylation of N-methyl-L-tryptophan. This is N-methyl-L-tryptophan oxidase from Escherichia coli O157:H7.